The primary structure comprises 741 residues: Type VI secretion system spike protein VgrG1b (741 aa).

2 stretches are compositionally biased toward polar residues: residues 614-629 (SIGA…NETI) and 649-663 (GNQS…SRSV). Residues 614–678 (SIGANRSESV…TSVGKDDSLD (65 aa)) form a disordered region.

The protein belongs to the VgrG protein family.

The protein localises to the secreted. In terms of biological role, part of the H1 type VI secretion system (H1-T6SS) specialized secretion system, which delivers several virulence factors in both prokaryotic and eukaryotic cells during infection. Allows the delivery of the Tse7 toxin to target cells where it exerts toxicity through its nuclease domain. This is Type VI secretion system spike protein VgrG1b from Pseudomonas aeruginosa (strain ATCC 15692 / DSM 22644 / CIP 104116 / JCM 14847 / LMG 12228 / 1C / PRS 101 / PAO1).